We begin with the raw amino-acid sequence, 98 residues long: Co-chaperonin GroES (98 aa).

The protein belongs to the GroES chaperonin family. In terms of assembly, heptamer of 7 subunits arranged in a ring. Interacts with the chaperonin GroEL.

The protein localises to the cytoplasm. In terms of biological role, together with the chaperonin GroEL, plays an essential role in assisting protein folding. The GroEL-GroES system forms a nano-cage that allows encapsulation of the non-native substrate proteins and provides a physical environment optimized to promote and accelerate protein folding. GroES binds to the apical surface of the GroEL ring, thereby capping the opening of the GroEL channel. This is Co-chaperonin GroES from Bartonella tribocorum (strain CIP 105476 / IBS 506).